The primary structure comprises 172 residues: Adenylate kinase isoenzyme 6 (172 aa).

ATP-binding residues include Gly-13, Gly-15, Lys-16, Thr-17, and Thr-18. Positions 33–56 are NMPbind; it reads NVGDLAREGHLYDGYDEEYGCPIL. An LID region spans residues 108 to 118; it reads TRGYHEKKLQD. Arg-109 contributes to the ATP binding site.

This sequence belongs to the adenylate kinase family. AK6 subfamily. As to quaternary structure, monomer and homodimer. Interacts with small ribosomal subunit protein uS11. Not a structural component of 43S pre-ribosomes, but transiently interacts with them by binding to uS11. Interacts with COIL (via C-terminus).

The protein resides in the cytoplasm. Its subcellular location is the nucleus. It is found in the nucleoplasm. The protein localises to the cajal body. It catalyses the reaction AMP + ATP = 2 ADP. The catalysed reaction is ATP + H2O = ADP + phosphate + H(+). Its function is as follows. Broad-specificity nucleoside monophosphate (NMP) kinase that catalyzes the reversible transfer of the terminal phosphate group between nucleoside triphosphates and monophosphates. Also has ATPase activity. Involved in the late cytoplasmic maturation steps of the 40S ribosomal particles, specifically 18S rRNA maturation. While NMP activity is not required for ribosome maturation, ATPase activity is. Associates transiently with small ribosomal subunit protein uS11. ATP hydrolysis breaks the interaction with uS11. May temporarily remove uS11 from the ribosome to enable a conformational change of the ribosomal RNA that is needed for the final maturation step of the small ribosomal subunit. Its NMP activity may have a role in nuclear energy homeostasis. May be involved in regulation of Cajal body (CB) formation. The polypeptide is Adenylate kinase isoenzyme 6 (Rattus norvegicus (Rat)).